We begin with the raw amino-acid sequence, 462 residues long: Hydroxymethylglutaryl-CoA synthase (462 aa).

Glutamate 86 functions as the Proton donor/acceptor in the catalytic mechanism. Catalysis depends on cysteine 120, which acts as the Acyl-thioester intermediate. (3S)-3-hydroxy-3-methylglutaryl-CoA contacts are provided by cysteine 120, threonine 211, histidine 261, lysine 270, asparagine 338, and serine 372. The active-site Proton donor/acceptor is the histidine 261.

It belongs to the thiolase-like superfamily. HMG-CoA synthase family.

It carries out the reaction acetoacetyl-CoA + acetyl-CoA + H2O = (3S)-3-hydroxy-3-methylglutaryl-CoA + CoA + H(+). It participates in siderophore biosynthesis. In terms of biological role, hydroxymethylglutaryl-CoA synthase involved in the biosynthesis of siderophore ferrichrome A which is contributing to organismal virulence. The first step of ferrichrome A biosynthesis is performed by the HMG-CoA synthase hcs1 which catalyzes the generation of HMG-CoA and CoA using acetoacetyl-CoA and acetyl-CoA as substrates. The enoyl-CoA isomerase/hydratase fer4 then catalyzes the conversion of hcs1-produced HMG-CoA to methylglutaconyl-CoA. The acyltransferase fer5 then fuses the fer4-generated methylglutaconyl-CoA with sid1-generated hydroxyornithine to yield methylglutaconyl hydroxyornithine. Methylglutaconyl hydroxyornithine is then available for use by the NRPS fer3 to generate ferrichrome A. The polypeptide is Hydroxymethylglutaryl-CoA synthase (Mycosarcoma maydis (Corn smut fungus)).